The following is a 276-amino-acid chain: Pyrroline-5-carboxylate reductase (276 aa).

It belongs to the pyrroline-5-carboxylate reductase family.

It localises to the cytoplasm. It catalyses the reaction L-proline + NADP(+) = (S)-1-pyrroline-5-carboxylate + NADPH + 2 H(+). It carries out the reaction L-proline + NAD(+) = (S)-1-pyrroline-5-carboxylate + NADH + 2 H(+). The protein operates within amino-acid biosynthesis; L-proline biosynthesis; L-proline from L-glutamate 5-semialdehyde: step 1/1. In Arabidopsis thaliana (Mouse-ear cress), this protein is Pyrroline-5-carboxylate reductase (PROC1).